The chain runs to 462 residues: Keratin, type I cytoskeletal 28 (462 aa).

The disordered stretch occupies residues 1 to 26 (MSLRFSGGSRHVGIQSGSLRPPSGGA). Residues 1–83 (MSLRFSGGSR…GSEGGLLSGN (83 aa)) are head. A coil 1A region spans residues 84–119 (EKVTMQNLNNRLASYLDNVKALEEANSELERKIKTW). Positions 84 to 399 (EKVTMQNLNN…RLIDGDENSC (316 aa)) constitute an IF rod domain. The segment at 120–141 (HEKYGPGSCRGLDRDYSKYHLT) is linker 1. A coil 1B region spans residues 142 to 233 (IEDLKSKIIS…KNHEEEMKVL (92 aa)). Residues 234 to 256 (QCAAGGNVNVEMNAAPGVDLTVL) are linker 12. The tract at residues 257–395 (LNNMRAEYEA…ETYCRLIDGD (139 aa)) is coil 2. Positions 396-462 (ENSCSVSKGF…NGKAEQRVPF (67 aa)) are tail.

It belongs to the intermediate filament family. In terms of assembly, heterotetramer of two type I and two type II keratins. In terms of tissue distribution, in the hair follicle and bulb, uniformly expressed in all three layers of the inner root sheath (the Henle layer, the Huxley layer and the cuticle) and observed in matrix cells (at protein level).

The protein localises to the cytoplasm. Its function is as follows. Essential for the proper assembly of types I and II keratin protein complexes and the formation of keratin intermediate filaments in the inner root sheath (irs). The sequence is that of Keratin, type I cytoskeletal 28 from Mus musculus (Mouse).